The chain runs to 200 residues: MARFRGSNWKKSRRLGISLSGTGKELEKRPYAPGQHGPNQRKKLSEYGLQLREKQKLRYLYGMTERQFRNTFDIAGKKFGVHGENFMILLASRLDAVVYSLGLARTRRQARQLVNHGHILVDGKRVDIPSYSVKPSQTISVREKSQKLNVIVESVEINNFVPEYLNFDADSLTGTFVRLPERSELPAEINEQLIVEYYSR.

The S4 RNA-binding domain occupies 92–155 (SRLDAVVYSL…QKLNVIVESV (64 aa)).

It belongs to the universal ribosomal protein uS4 family. In terms of assembly, part of the 30S ribosomal subunit. Contacts protein S5. The interaction surface between S4 and S5 is involved in control of translational fidelity.

In terms of biological role, one of the primary rRNA binding proteins, it binds directly to 16S rRNA where it nucleates assembly of the body of the 30S subunit. Functionally, with S5 and S12 plays an important role in translational accuracy. The protein is Small ribosomal subunit protein uS4 of Staphylococcus aureus (strain MRSA252).